The chain runs to 97 residues: Exodeoxyribonuclease 7 small subunit (97 aa).

The interval 1 to 22 is disordered; that stretch reads MAKTASPGATPPGNGTEPLPDN.

The protein belongs to the XseB family. As to quaternary structure, heterooligomer composed of large and small subunits.

It is found in the cytoplasm. It catalyses the reaction Exonucleolytic cleavage in either 5'- to 3'- or 3'- to 5'-direction to yield nucleoside 5'-phosphates.. Its function is as follows. Bidirectionally degrades single-stranded DNA into large acid-insoluble oligonucleotides, which are then degraded further into small acid-soluble oligonucleotides. The polypeptide is Exodeoxyribonuclease 7 small subunit (Burkholderia cenocepacia (strain HI2424)).